Consider the following 196-residue polypeptide: Acyl-homoserine-lactone synthase (196 aa).

This sequence belongs to the autoinducer synthase family.

It carries out the reaction a fatty acyl-[ACP] + S-adenosyl-L-methionine = an N-acyl-L-homoserine lactone + S-methyl-5'-thioadenosine + holo-[ACP] + H(+). Required for the synthesis of a yet unknown N-aceyl-homoserine lactone (N-aceyl-HSL), an autoinducer molecule which binds to PhzR and thus regulates phenazine production. In Pseudomonas fluorescens, this protein is Acyl-homoserine-lactone synthase (phzI).